Here is a 106-residue protein sequence, read N- to C-terminus: PTS system N,N'-diacetylchitobiose-specific EIIB component (106 aa).

One can recognise a PTS EIIB type-3 domain in the interval 3–106 (KKHIYLFCSA…VAAIKKAAAN (104 aa)). Cysteine 10 functions as the Phosphocysteine intermediate in the catalytic mechanism. Position 10 is a phosphocysteine; by EIIA (cysteine 10).

Forms a complex with ChbA (EIIA). ChbB is a monomer in both its unphosphorylated and phosphorylated forms.

It is found in the cytoplasm. The enzyme catalyses N,N'-diacetylchitobiose(out) + N(pros)-phospho-L-histidyl-[protein] = diacetylchitobiose-6'-phosphate(in) + L-histidyl-[protein]. The phosphoenolpyruvate-dependent sugar phosphotransferase system (sugar PTS), a major carbohydrate active transport system, catalyzes the phosphorylation of incoming sugar substrates concomitantly with their translocation across the cell membrane. The enzyme II ChbABC PTS system is involved in the transport of the chitin disaccharide N,N'-diacetylchitobiose (GlcNAc2). This is PTS system N,N'-diacetylchitobiose-specific EIIB component (chbB) from Escherichia coli O157:H7.